A 415-amino-acid polypeptide reads, in one-letter code: Homoserine O-acetyltransferase (415 aa).

The AB hydrolase-1 domain occupies 47-369; it reads NAVLVCHGLT…HGHDAFLVEP (323 aa). Serine 155 functions as the Nucleophile in the catalytic mechanism. Residue arginine 226 coordinates substrate. Active-site residues include aspartate 329 and histidine 362. Residue aspartate 363 coordinates substrate. The segment at 383–415 is disordered; the sequence is GVAGRAVTDTAPDGGEPDEDEDFAPVHSSLFSR.

This sequence belongs to the AB hydrolase superfamily. MetX family. As to quaternary structure, homodimer.

It is found in the cytoplasm. The catalysed reaction is L-homoserine + acetyl-CoA = O-acetyl-L-homoserine + CoA. Its pathway is amino-acid biosynthesis; L-methionine biosynthesis via de novo pathway; O-acetyl-L-homoserine from L-homoserine: step 1/1. Functionally, transfers an acetyl group from acetyl-CoA to L-homoserine, forming acetyl-L-homoserine. This is Homoserine O-acetyltransferase from Haloferax volcanii (strain ATCC 29605 / DSM 3757 / JCM 8879 / NBRC 14742 / NCIMB 2012 / VKM B-1768 / DS2) (Halobacterium volcanii).